Reading from the N-terminus, the 427-residue chain is Enolase (427 aa).

Glutamine 163 contributes to the (2R)-2-phosphoglycerate binding site. Glutamate 205 functions as the Proton donor in the catalytic mechanism. Mg(2+) is bound by residues aspartate 242, glutamate 285, and aspartate 312. Residues lysine 337, arginine 366, serine 367, and lysine 388 each coordinate (2R)-2-phosphoglycerate. Lysine 337 acts as the Proton acceptor in catalysis.

The protein belongs to the enolase family. Requires Mg(2+) as cofactor.

The protein resides in the cytoplasm. It is found in the secreted. Its subcellular location is the cell surface. It catalyses the reaction (2R)-2-phosphoglycerate = phosphoenolpyruvate + H2O. Its pathway is carbohydrate degradation; glycolysis; pyruvate from D-glyceraldehyde 3-phosphate: step 4/5. In terms of biological role, catalyzes the reversible conversion of 2-phosphoglycerate (2-PG) into phosphoenolpyruvate (PEP). It is essential for the degradation of carbohydrates via glycolysis. The polypeptide is Enolase (Rhodopseudomonas palustris (strain TIE-1)).